The sequence spans 508 residues: Photosystem II CP47 reaction center protein (508 aa).

6 consecutive transmembrane segments (helical) span residues 21-36 (SVHI…WAGS), 101-115 (IVFS…IWHW), 140-156 (GIHL…FGAF), 203-218 (IAAG…FHLS), 237-252 (VLSS…AFVV), and 457-472 (SFAL…HGAR).

The protein belongs to the PsbB/PsbC family. PsbB subfamily. In terms of assembly, PSII is composed of 1 copy each of membrane proteins PsbA, PsbB, PsbC, PsbD, PsbE, PsbF, PsbH, PsbI, PsbJ, PsbK, PsbL, PsbM, PsbT, PsbX, PsbY, PsbZ, Psb30/Ycf12, at least 3 peripheral proteins of the oxygen-evolving complex and a large number of cofactors. It forms dimeric complexes. Binds multiple chlorophylls. PSII binds additional chlorophylls, carotenoids and specific lipids. is required as a cofactor.

It is found in the plastid. It localises to the chloroplast thylakoid membrane. Its function is as follows. One of the components of the core complex of photosystem II (PSII). It binds chlorophyll and helps catalyze the primary light-induced photochemical processes of PSII. PSII is a light-driven water:plastoquinone oxidoreductase, using light energy to abstract electrons from H(2)O, generating O(2) and a proton gradient subsequently used for ATP formation. In Panax ginseng (Korean ginseng), this protein is Photosystem II CP47 reaction center protein.